The sequence spans 324 residues: tRNA dimethylallyltransferase (324 aa).

17–24 serves as a coordination point for ATP; sequence GPTASGKT. 19–24 lines the substrate pocket; the sequence is TASGKT. Interaction with substrate tRNA stretches follow at residues 42–45, 166–170, and 251–256; these read DSAL, QRIQR, and RCVGYR.

It belongs to the IPP transferase family. Monomer. Mg(2+) serves as cofactor.

It catalyses the reaction adenosine(37) in tRNA + dimethylallyl diphosphate = N(6)-dimethylallyladenosine(37) in tRNA + diphosphate. In terms of biological role, catalyzes the transfer of a dimethylallyl group onto the adenine at position 37 in tRNAs that read codons beginning with uridine, leading to the formation of N6-(dimethylallyl)adenosine (i(6)A). The protein is tRNA dimethylallyltransferase of Burkholderia pseudomallei (strain 668).